The following is a 47-amino-acid chain: Cytochrome b559 subunit beta (47 aa).

A helical membrane pass occupies residues 23 to 39 (WLAVHALAIPSVFFLGA). Position 27 (histidine 27) interacts with heme.

Belongs to the PsbE/PsbF family. Heterodimer of an alpha subunit and a beta subunit. PSII is composed of 1 copy each of membrane proteins PsbA, PsbB, PsbC, PsbD, PsbE, PsbF, PsbH, PsbI, PsbJ, PsbK, PsbL, PsbM, PsbT, PsbX, PsbY, Psb30/Ycf12, peripheral proteins PsbO, CyanoQ (PsbQ), PsbU, PsbV and a large number of cofactors. It forms dimeric complexes. Heme b serves as cofactor.

The protein localises to the cellular thylakoid membrane. In terms of biological role, this b-type cytochrome is tightly associated with the reaction center of photosystem II (PSII). PSII is a light-driven water:plastoquinone oxidoreductase that uses light energy to abstract electrons from H(2)O, generating O(2) and a proton gradient subsequently used for ATP formation. It consists of a core antenna complex that captures photons, and an electron transfer chain that converts photonic excitation into a charge separation. This is Cytochrome b559 subunit beta from Prochlorococcus marinus subsp. pastoris (strain CCMP1986 / NIES-2087 / MED4).